Reading from the N-terminus, the 260-residue chain is MLLNALASLGHKGIKTLRTFGRAGLMLFNALVGKPEFRKHAPLLVRQLYNVGVLSMLIIVVSGVFIGMVLGLQGYLVLTTYSAETSLGMLVALSLLRELGPVVAALLFAGRAGSALTAEIGLMRATEQLSSMEMMAVDPLRRVISPRFWAGVISLPLLTVIFVAVGIWGGSLVGVSWKGIDSGFFWSAMQNAVDWRMDLVNCLIKSVVFAITVTWISLFNGYDAIPTSAGISRATTRTVVHSSLAVLGLDFVLTALMFGN.

Residues 1–50 are Cytoplasmic-facing; that stretch reads MLLNALASLGHKGIKTLRTFGRAGLMLFNALVGKPEFRKHAPLLVRQLYN. The helical transmembrane segment at 51 to 71 threads the bilayer; the sequence is VGVLSMLIIVVSGVFIGMVLG. At 72-88 the chain is on the periplasmic side; it reads LQGYLVLTTYSAETSLG. Residues 89–109 traverse the membrane as a helical segment; it reads MLVALSLLRELGPVVAALLFA. Over 110–147 the chain is Cytoplasmic; the sequence is GRAGSALTAEIGLMRATEQLSSMEMMAVDPLRRVISPR. Residues 148 to 168 traverse the membrane as a helical segment; sequence FWAGVISLPLLTVIFVAVGIW. The Periplasmic portion of the chain corresponds to 169–198; sequence GGSLVGVSWKGIDSGFFWSAMQNAVDWRMD. Residues 199-219 traverse the membrane as a helical segment; that stretch reads LVNCLIKSVVFAITVTWISLF. Over 220-238 the chain is Cytoplasmic; that stretch reads NGYDAIPTSAGISRATTRT. The helical transmembrane segment at 239 to 259 threads the bilayer; sequence VVHSSLAVLGLDFVLTALMFG. Asn260 is a topological domain (periplasmic).

The protein belongs to the MlaE permease family. The complex is composed of two ATP-binding proteins (MlaF), two transmembrane proteins (MlaE), two cytoplasmic solute-binding proteins (MlaB) and six periplasmic solute-binding proteins (MlaD).

Its subcellular location is the cell inner membrane. Its function is as follows. Part of the ABC transporter complex MlaFEDB, which is involved in a phospholipid transport pathway that maintains lipid asymmetry in the outer membrane by retrograde trafficking of phospholipids from the outer membrane to the inner membrane. Probably responsible for the translocation of the substrate across the membrane. The polypeptide is Intermembrane phospholipid transport system permease protein MlaE (Escherichia coli O157:H7).